The sequence spans 166 residues: Small ribosomal subunit protein uS9 (166 aa).

The disordered stretch occupies residues 135–166 (KKAGFLTRDPRATERKKYGLKKARKAPQYSKR). A compositionally biased stretch (basic and acidic residues) spans 142–151 (RDPRATERKK). Residues 152-166 (YGLKKARKAPQYSKR) are compositionally biased toward basic residues.

The protein belongs to the universal ribosomal protein uS9 family.

The sequence is that of Small ribosomal subunit protein uS9 from Mycobacterium avium (strain 104).